A 360-amino-acid polypeptide reads, in one-letter code: Photosystem II protein D1 (360 aa).

3 consecutive transmembrane segments (helical) span residues 29–46 (YIGW…TATS), 118–133 (HFLL…EWEL), and 142–156 (WISV…AAAA). Residue His118 coordinates chlorophyll a. Tyr126 contacts pheophytin a. 2 residues coordinate [CaMn4O5] cluster: Asp170 and Glu189. The helical transmembrane segment at 197–218 (FHQLGVAGVFGGSLFSAMHGSL) threads the bilayer. His198 is a binding site for chlorophyll a. A quinone contacts are provided by residues His215 and 264–265 (SF). His215 is a binding site for Fe cation. A Fe cation-binding site is contributed by His272. The chain crosses the membrane as a helical span at residues 274–288 (FLGAWPVVGIWLTSM). His332, Glu333, Asp342, and Ala344 together coordinate [CaMn4O5] cluster. The propeptide occupies 345–360 (SGDSCPVALVAPSING).

It belongs to the reaction center PufL/M/PsbA/D family. In terms of assembly, PSII is composed of 1 copy each of membrane proteins PsbA, PsbB, PsbC, PsbD, PsbE, PsbF, PsbH, PsbI, PsbJ, PsbK, PsbL, PsbM, PsbT, PsbX, PsbY, PsbZ, Psb30/Ycf12, at least 3 peripheral proteins of the oxygen-evolving complex and a large number of cofactors. It forms dimeric complexes. The cofactor is The D1/D2 heterodimer binds P680, chlorophylls that are the primary electron donor of PSII, and subsequent electron acceptors. It shares a non-heme iron and each subunit binds pheophytin, quinone, additional chlorophylls, carotenoids and lipids. D1 provides most of the ligands for the Mn4-Ca-O5 cluster of the oxygen-evolving complex (OEC). There is also a Cl(-1) ion associated with D1 and D2, which is required for oxygen evolution. The PSII complex binds additional chlorophylls, carotenoids and specific lipids.. In terms of processing, tyr-161 forms a radical intermediate that is referred to as redox-active TyrZ, YZ or Y-Z. C-terminally processed by CTPA; processing is essential to allow assembly of the oxygen-evolving complex and thus photosynthetic growth.

Its subcellular location is the plastid. It localises to the chloroplast thylakoid membrane. It catalyses the reaction 2 a plastoquinone + 4 hnu + 2 H2O = 2 a plastoquinol + O2. Photosystem II (PSII) is a light-driven water:plastoquinone oxidoreductase that uses light energy to abstract electrons from H(2)O, generating O(2) and a proton gradient subsequently used for ATP formation. It consists of a core antenna complex that captures photons, and an electron transfer chain that converts photonic excitation into a charge separation. The D1/D2 (PsbA/PsbD) reaction center heterodimer binds P680, the primary electron donor of PSII as well as several subsequent electron acceptors. The protein is Photosystem II protein D1 of Palmaria palmata (Dulse).